We begin with the raw amino-acid sequence, 252 residues long: Ribosomal RNA small subunit methyltransferase J (252 aa).

S-adenosyl-L-methionine-binding positions include 101–102, 117–118, 153–154, and Asp-171; these read RD, ER, and SS.

Belongs to the methyltransferase superfamily. RsmJ family.

Its subcellular location is the cytoplasm. The catalysed reaction is guanosine(1516) in 16S rRNA + S-adenosyl-L-methionine = N(2)-methylguanosine(1516) in 16S rRNA + S-adenosyl-L-homocysteine + H(+). Functionally, specifically methylates the guanosine in position 1516 of 16S rRNA. The protein is Ribosomal RNA small subunit methyltransferase J of Salmonella schwarzengrund (strain CVM19633).